The primary structure comprises 665 residues: DNA ligase (665 aa).

NAD(+) contacts are provided by residues 34–38 (DEEYD), 83–84 (SL), and E114. The N6-AMP-lysine intermediate role is filled by K116. R137, E171, K287, and K311 together coordinate NAD(+). Zn(2+) is bound by residues C405, C408, C424, and C429. The 79-residue stretch at 587-665 (KKSSKLAGLT…EDEFKKMIID (79 aa)) folds into the BRCT domain.

Belongs to the NAD-dependent DNA ligase family. LigA subfamily. The cofactor is Mg(2+). Mn(2+) is required as a cofactor.

It catalyses the reaction NAD(+) + (deoxyribonucleotide)n-3'-hydroxyl + 5'-phospho-(deoxyribonucleotide)m = (deoxyribonucleotide)n+m + AMP + beta-nicotinamide D-nucleotide.. In terms of biological role, DNA ligase that catalyzes the formation of phosphodiester linkages between 5'-phosphoryl and 3'-hydroxyl groups in double-stranded DNA using NAD as a coenzyme and as the energy source for the reaction. It is essential for DNA replication and repair of damaged DNA. The protein is DNA ligase of Thermosipho africanus (strain TCF52B).